We begin with the raw amino-acid sequence, 2075 residues long: MPWPFSESIKKRACRYLLQRYLGHFLQEKLSLEQLSLDLYQGTGSLAQVPLDKWCLNEILESADAPLEVTEGFIQSISLSVPWGSLLQDNCALEVRGLEMVFRPRPRVATGSEPMYWSSFMTSSMQLAKECLSQKLTDEQGEASQPFEGLEKFAETIETVLRRVKVTFIDTVLRIEHVPENSKTGAALEIRVDRTVYCDETADESSGVNVHQPTAFAHKLLQLSGVSLFWDEFSASAKSSPVCSTAPVETEPKLSPSWNPKIVYEPHPQLTRTLPEIAPSDPVQIGRLLGRLELSLTLKQNEVLPGAKLDVDGQIDSFHLFLSPRQVHLLLDMLAAIAGPENSSKIGLANKDRKNRPMQQEDEYRIQMELNRYYLRKDSLSMGVSSEKSFYETETARTPSSREEEVFFSMADMDMSHSLSSLPPLGDPPHMDLELSLTSTYTNTPAGSPLSATVLQPTWGEFADHKEQPVRGPAFQSDVVHPASLQKAALSSRSASVDESRPEFICRLALGIFSVSVLHIDPLSPAETSLNVNPLTRMATDFFSCVEKMDPAIFSTGDFKSFRAVFAEACSHDHLRFIGTGIKVSYEQRQRSASRHFSTDMSVGQMEFLECLFPTDCHSVPSHYTELLTFHSKEGTDAHLPVCLQLHYKHSETRGPQGNQARLSSVPQKAELQIKLNPVCCELDISIVDRLNSLLQPQKLTTVEMMASHMYASYNKHISLHKAFTEVFLDDSHSPANRRVSVQVATPALHLSVRFPIPDLRSDQERGPWFKKSLQKETLHLEFTDLESKTEFVGGSTPEQTKLELTFRELSGSFQEEKGGPSVKFFHVSGGVDGDTASSDDFDWPRMVLKINPPAMHSILERIAAEEEEENDGHYQEEEDGGAHSLKDVCDLRRPAPSPFSSRRVMFENEQMVMPGDPVEMTEFQDKAISNSHYVLELLLPNIHLTLPNKGFYEKLYNRIFNDLLLWEPTAPSPVETLENVSYGIGLSVASQLINTFSKDSFSPFKSAVHYDEDSGSEEETLQYFSAVDPNYRSRRKKKLDSQNKNSQSFLSVLLSINHGLMAVFTDVKQENGDPMESKHGEFWLEFNSGSFFCVTKYEGFEDKHYICLHSSSLRLYHKGIVDGAILPTETRLPCSTRPHWLEPTIYSSEEDGLSRTASDGVGGDNLNMLSVAVKILSDKSESNTKEFLVAVGLKGATLQHRVLPAGLSWHEQILNFLNIADEPVLGYNPPTSFTTFHVHLWSCALDYRPLHLPLRSLLTVETFSISSSVALDKSSSTLRIIMDEAALHLSDKCNTVTVNLNRDYVRVMDMGLLELTITAVKSDSDGEQTAPRFELHCSSDVVHIRTCSDSCAALMNLIQYVASYGDLHGPHKAEMKPGVPQRKPKVDSSARSSSHGPVLPEADQQILRDLMSDAMEEIDLQQASAPVGPQANGVLDEKSHTQEPCCSDLFLFPDESGNVSQESSPAYPSLTHHLISDAVTGVTAENDDFCILFAPKTVVQEKEEEPVIKIMVDDAIVIKDDYFSLPITRTDSSKAPLHFPIPAVRYVVKEVSLVWHLYGGKDFATAPPTSPAKSYIPHSSPSQTPTRHGRHTVCGGKGRNHDFLMEIQLSKVKFQHEVYPPCKPECESSLLEHPVSRQVFIVQDLEIRDRLATSQMNKFLYLYCSKDMPRKAHSNMLTIKALHVRPESGRSPQECCLRVSLMPLRLNIDQDALFFLKDFFTSLSTEVELLLTPDPEVTKSPGADVTCSLPRHLSTSKEPNLVVSFPGPKQASPNHRANSAEGGNGLEEDVSAEETSFSDQPVFFREFRFTAEVPIRLDYHGKHVSMDQGTLAGILIGLAQLNCSELKLKRLFYRHGLLGIDKLFSYAISEWLSDIKKNQLPGILGGVGPMHSLVQLVQGLKDLVWLPIEQYRKDGRIVRGFQRGAASFGTSTAMAALELTNRMVQTIQAAAETAYDMVSPSTLSIEPKKAKRFPHHRLAHQPVDLREGVAKAYSVVKEGITDTAQTIYETAAREHESRGVTGAVGEVLRQIPPAVVRPLIVATEATSNVLGGMRNQIRPDVRQDESQKWRHGED.

One can recognise a Chorein N-terminal domain in the interval Ala-13–Arg-107. Phosphoserine occurs at positions 255, 379, 496, 839, 885, 898, and 1007. Tyr-1011 carries the phosphotyrosine modification. Phosphoserine is present on residues Ser-1015 and Ser-1017. Position 1021 is a phosphothreonine (Thr-1021). The segment at Lys-1373–Ala-1403 is disordered. Ser-1525 is modified (phosphoserine). Disordered stretches follow at residues Thr-1570–Thr-1593, Glu-1759–Ser-1792, and Arg-2055–Asp-2075. Residues Pro-1578–Thr-1587 are compositionally biased toward polar residues. The segment covering Ile-2058 to Asp-2075 has biased composition (basic and acidic residues).

Belongs to the ATG2 family. In terms of assembly, interacts with WDR45/WIPI4.

It localises to the preautophagosomal structure membrane. Its subcellular location is the lipid droplet. It is found in the endoplasmic reticulum membrane. It catalyses the reaction a 1,2-diacyl-sn-glycero-3-phospho-L-serine(in) = a 1,2-diacyl-sn-glycero-3-phospho-L-serine(out). It carries out the reaction a 1,2-diacyl-sn-glycero-3-phosphoethanolamine(in) = a 1,2-diacyl-sn-glycero-3-phosphoethanolamine(out). Functionally, lipid transfer protein required for both autophagosome formation and regulation of lipid droplet morphology and dispersion. Tethers the edge of the isolation membrane (IM) to the endoplasmic reticulum (ER) and mediates direct lipid transfer from ER to IM for IM expansion. Binds to the ER exit site (ERES), which is the membrane source for autophagosome formation, and extracts phospholipids from the membrane source and transfers them to ATG9 (ATG9A or ATG9B) to the IM for membrane expansion. Lipid transfer activity is enhanced by WDR45/WIPI4, which promotes ATG2B-association with phosphatidylinositol 3-monophosphate (PI3P)-containing membranes. The polypeptide is Autophagy-related protein 2 homolog B (Mus musculus (Mouse)).